The chain runs to 702 residues: Ribosomal RNA large subunit methyltransferase K/L (702 aa).

The THUMP domain maps to 43–154 (LVYQSLMWSR…KETASIALDL (112 aa)).

It belongs to the methyltransferase superfamily. RlmKL family.

Its subcellular location is the cytoplasm. The enzyme catalyses guanosine(2445) in 23S rRNA + S-adenosyl-L-methionine = N(2)-methylguanosine(2445) in 23S rRNA + S-adenosyl-L-homocysteine + H(+). It carries out the reaction guanosine(2069) in 23S rRNA + S-adenosyl-L-methionine = N(2)-methylguanosine(2069) in 23S rRNA + S-adenosyl-L-homocysteine + H(+). In terms of biological role, specifically methylates the guanine in position 2445 (m2G2445) and the guanine in position 2069 (m7G2069) of 23S rRNA. The polypeptide is Ribosomal RNA large subunit methyltransferase K/L (Escherichia coli O6:H1 (strain CFT073 / ATCC 700928 / UPEC)).